The primary structure comprises 493 residues: ATP synthase subunit beta 3 (493 aa).

A disordered region spans residues 113–138 (VPGDNGTPLPPGTPRRPIHRKPPPLA). 170-177 (GGAGVGKT) lines the ATP pocket.

This sequence belongs to the ATPase alpha/beta chains family. F-type ATPases have 2 components, CF(1) - the catalytic core - and CF(0) - the membrane proton channel. CF(1) has five subunits: alpha(3), beta(3), gamma(1), delta(1), epsilon(1). CF(0) has three main subunits: a(1), b(2) and c(9-12). The alpha and beta chains form an alternating ring which encloses part of the gamma chain. CF(1) is attached to CF(0) by a central stalk formed by the gamma and epsilon chains, while a peripheral stalk is formed by the delta and b chains.

It localises to the cell inner membrane. It catalyses the reaction ATP + H2O + 4 H(+)(in) = ADP + phosphate + 5 H(+)(out). Functionally, produces ATP from ADP in the presence of a proton gradient across the membrane. The catalytic sites are hosted primarily by the beta subunits. The chain is ATP synthase subunit beta 3 from Paraburkholderia xenovorans (strain LB400).